The following is a 276-amino-acid chain: SF-assemblin (276 aa).

Positions 1–31 are nonhelical region; that stretch reads MSLRPFETPGGLSSLSPRRRDFSPTRPGTNG. The tract at residues 1–37 is disordered; sequence MSLRPFETPGGLSSLSPRRRDFSPTRPGTNGPSAKLE. The tract at residues 32-276 is rod; it reads PSAKLEHVTE…LQEGLKLVSA (245 aa). Residues 67–145 are a coiled coil; the sequence is LLQESLQRIE…LVRDERESRR (79 aa).

Belongs to the SF-assemblin family.

It localises to the cytoplasm. The protein resides in the cytoskeleton. In terms of biological role, major component of the striated microtubule-associated fibers (SMAFs; system-I-fibers). In Chlamydomonas reinhardtii (Chlamydomonas smithii), this protein is SF-assemblin.